The following is a 265-amino-acid chain: Tetrapyrrole-binding protein, chloroplastic (265 aa).

Positions 1–24 (MATTNSLHHHHHSSPSYTHHRNNL) are disordered. The transit peptide at 1–69 (MATTNSLHHH…TAVSAVSTTN (69 aa)) directs the protein to the chloroplast. A compositionally biased stretch (basic residues) spans 7 to 23 (LHHHHHSSPSYTHHRNN).

In terms of assembly, interacts with CHLH, the protoporphyrin IX-binding subunit of Mg-chelatase. Monomer or extremely compact dimer.

It is found in the plastid. It localises to the chloroplast membrane. Functionally, regulates chlorophyll synthesis and plastid-to-nucleus signal transduction by binding both the product and the substrate of Mg-chelatase, an enzyme that produces magnesium-protoporphyrin IX (Mg-Proto). Also activates Mg-chelatase. Neither binds abscisic acid (ABA) nor is involved in ABA signaling. The chain is Tetrapyrrole-binding protein, chloroplastic (GUN4) from Arabidopsis thaliana (Mouse-ear cress).